A 749-amino-acid polypeptide reads, in one-letter code: Cytosolic phospholipase A2 (749 aa).

Positions 1 to 178 are phospholipid binding; the sequence is MSFIDPYQHI…MKKLLGPKKS (178 aa). Residue Ser-2 is modified to Phosphoserine. In terms of domain architecture, C2 spans 6–122; sequence PYQHIIVEHQ…KVGEKKEVPF (117 aa). Residues Asp-40, Thr-41, Asp-43, Asn-65, Asp-93, Ala-94, and Asn-95 each coordinate Ca(2+). Residues 140-740 enclose the PLA2c domain; it reads SCPDLRFSMA…SNVEARRFFN (601 aa). The active-site Nucleophile is Ser-228. Position 268 is a phosphothreonine (Thr-268). The tract at residues 427 to 456 is disordered; the sequence is KHIVSNDSSDSDDESQEPKGTENEDAERDY. Phosphoserine occurs at positions 434, 435, and 437. Ser-505 bears the Phosphoserine; by MAPK mark. Ser-515 is modified (phosphoserine). A Glycyl lysine isopeptide (Lys-Gly) (interchain with G-Cter in SUMO2) cross-link involves residue Lys-541. The active-site Proton acceptor is Asp-549. Lys-606 is covalently cross-linked (Glycyl lysine isopeptide (Lys-Gly) (interchain with G-Cter in SUMO2)). 2 positions are modified to phosphoserine: Ser-727 and Ser-729.

As to quaternary structure, interacts with KAT5. Phosphorylated at both Ser-505 and Ser-727 in response to mitogenic stimuli.

Its subcellular location is the cytoplasm. The protein localises to the golgi apparatus membrane. It localises to the nucleus envelope. The enzyme catalyses a 1,2-diacyl-sn-glycero-3-phosphocholine + H2O = a 1-acyl-sn-glycero-3-phosphocholine + a fatty acid + H(+). It carries out the reaction a 1-O-alkyl-2-acyl-sn-glycero-3-phosphocholine + H2O = a 1-O-alkyl-sn-glycero-3-phosphocholine + a fatty acid + H(+). It catalyses the reaction a 1-acyl-sn-glycero-3-phosphocholine + H2O = sn-glycerol 3-phosphocholine + a fatty acid + H(+). The catalysed reaction is 1-hexadecanoyl-2-(5Z,8Z,11Z,14Z-eicosatetraenoyl)-sn-glycero-3-phosphocholine + H2O = 1-hexadecanoyl-sn-glycero-3-phosphocholine + (5Z,8Z,11Z,14Z)-eicosatetraenoate + H(+). The enzyme catalyses 1,2-di-(5Z,8Z,11Z,14Z-eicosatetraenoyl)-sn-glycero-3-phosphocholine + H2O = 1-(5Z,8Z,11Z,14Z-eicosatetraenoyl)-sn-glycero-3-phosphocholine + (5Z,8Z,11Z,14Z)-eicosatetraenoate + H(+). It carries out the reaction 1-octadecanoyl-2-(5Z,8Z,11Z,14Z-eicosatetraenoyl)-sn-glycero-3-phosphocholine + H2O = 1-octadecanoyl-sn-glycero-3-phosphocholine + (5Z,8Z,11Z,14Z)-eicosatetraenoate + H(+). It catalyses the reaction 1-hexadecanoyl-2-(9Z,12Z-octadecadienoyl)-sn-glycero-3-phosphocholine + H2O = (9Z,12Z)-octadecadienoate + 1-hexadecanoyl-sn-glycero-3-phosphocholine + H(+). The catalysed reaction is 1-octadecanoyl-2-(9Z,12Z,15Z-octadecatrienoyl)-sn-glycero-3-phosphocholine + H2O = (9Z,12Z,15Z)-octadecatrienoate + 1-octadecanoyl-sn-glycero-3-phosphocholine + H(+). The enzyme catalyses 1-(5Z,8Z,11Z,14Z-eicosatetraenoyl)-2-hexadecanoyl-sn-glycero-3-phosphocholine + H2O = 1-(5Z,8Z,11Z,14Z-eicosatetraenoyl)-sn-glycero-3-phosphocholine + hexadecanoate + H(+). It carries out the reaction 1-O-hexadecyl-2-(5Z,8Z,11Z,14Z)-eicosatetraenoyl-sn-glycero-3-phosphocholine + H2O = 1-O-hexadecyl-sn-glycero-3-phosphocholine + (5Z,8Z,11Z,14Z)-eicosatetraenoate + H(+). It catalyses the reaction 1,2-di-(9Z-octadecenoyl)-sn-glycero-3-phospho-(1'-sn-glycerol) + H2O = 1-(9Z-octadecenoyl)-sn-glycero-3-phospho-(1'-sn-glycerol) + (9Z)-octadecenoate + H(+). The catalysed reaction is 1-octadecanoyl-2-(5Z,8Z,11Z,14Z-eicosatetraenoyl)-sn-glycero-3-phosphate + H2O = 1-octadecanoyl-sn-glycero-3-phosphate + (5Z,8Z,11Z,14Z)-eicosatetraenoate + H(+). The enzyme catalyses 1-hexadecanoyl-sn-glycero-3-phosphocholine + H2O = sn-glycerol 3-phosphocholine + hexadecanoate + H(+). It carries out the reaction 2-(prostaglandin E2)-sn-glycero-3-phosphoethanolamine + H2O = sn-glycero-3-phosphoethanolamine + prostaglandin E2 + H(+). It catalyses the reaction 2-[(15S)-hydroxy-(5Z,8Z,11Z,13E)-eicosatetraenoyl]-sn-glycero-3-phosphocholine + H2O = (15S)-hydroxy-(5Z,8Z,11Z,13E)-eicosatetraenoate + sn-glycerol 3-phosphocholine + H(+). The catalysed reaction is 2-[(15R)-hydroxy-(5Z,8Z,11Z,13E)-eicosatetraenoyl]-sn-glycero-3-phosphocholine + H2O = (15R)-hydroxy-(5Z,8Z,11Z,13E)-eicosatetraenoate + sn-glycerol 3-phosphocholine + H(+). The enzyme catalyses 2-(prostaglandin E2)-sn-glycero-3-phosphocholine + H2O = prostaglandin E2 + sn-glycerol 3-phosphocholine + H(+). It carries out the reaction 2-[(11R)-hydroxy-(5Z,8Z,12E,14Z)-eicosatetraenoyl]-sn-glycero-3-phosphocholine + H2O = (11R)-hydroxy-(5Z,8Z,12E,14Z)-eicosatetraenoate + sn-glycerol 3-phosphocholine + H(+). It catalyses the reaction 1-(5Z,8Z,11Z,14Z-eicosatetraenoyl)-2-O-hexadecyl-sn-glycero-3-phosphocholine + H2O = 2-O-hexadecyl-sn-glycero-3-phosphocholine + (5Z,8Z,11Z,14Z)-eicosatetraenoate + H(+). The catalysed reaction is 1-octadecanoyl-2-(5Z,8Z,11Z,14Z-eicosatetraenoyl)-sn-glycero-3-phosphocholine + glycerol = 1-(5Z,8Z,11Z,14Z-eicosatetraenoyl)-glycerol + 1-octadecanoyl-sn-glycero-3-phosphocholine. The enzyme catalyses 1-octadecanoyl-2-(9Z,12Z,15Z-octadecatrienoyl)-sn-glycero-3-phosphocholine + glycerol = 1-(9Z,12Z,15Z-octadecatrienoyl)-glycerol + 1-octadecanoyl-sn-glycero-3-phosphocholine. It participates in membrane lipid metabolism; glycerophospholipid metabolism. The protein operates within lipid metabolism; arachidonate metabolism. It functions in the pathway lipid metabolism; prostaglandin biosynthesis. Its pathway is lipid metabolism; leukotriene B4 biosynthesis. Activated by cytosolic calcium, which is necessary for binding to membrane lipids. Activated by phosphorylation in response to mitogenic stimuli. Functionally, has primarily calcium-dependent phospholipase and lysophospholipase activities, with a major role in membrane lipid remodeling and biosynthesis of lipid mediators of the inflammatory response. Plays an important role in embryo implantation and parturition through its ability to trigger prostanoid production. Preferentially hydrolyzes the ester bond of the fatty acyl group attached at sn-2 position of phospholipids (phospholipase A2 activity). Selectively hydrolyzes sn-2 arachidonoyl group from membrane phospholipids, providing the precursor for eicosanoid biosynthesis via the cyclooxygenase pathway. In an alternative pathway of eicosanoid biosynthesis, hydrolyzes sn-2 fatty acyl chain of eicosanoid lysophopholipids to release free bioactive eicosanoids. Hydrolyzes the ester bond of the fatty acyl group attached at sn-1 position of phospholipids (phospholipase A1 activity) only if an ether linkage rather than an ester linkage is present at the sn-2 position. This hydrolysis is not stereospecific. Has calcium-independent phospholipase A2 and lysophospholipase activities in the presence of phosphoinositides. Has O-acyltransferase activity. Catalyzes the transfer of fatty acyl chains from phospholipids to a primary hydroxyl group of glycerol (sn-1 or sn-3), potentially contributing to monoacylglycerol synthesis. This chain is Cytosolic phospholipase A2 (PLA2G4A), found in Equus caballus (Horse).